A 283-amino-acid chain; its full sequence is Polyamine aminopropyltransferase (283 aa).

A PABS domain is found at 2–237 (ELWYTDQHTK…GHWLFGFASK (236 aa)). Gln-31 is a binding site for S-methyl-5'-thioadenosine. Residues His-62 and Asp-86 each coordinate spermidine. Residues Glu-106 and 137-138 (EG) contribute to the S-methyl-5'-thioadenosine site. The active-site Proton acceptor is the Asp-155. Position 155 to 158 (155 to 158 (DCAD)) interacts with spermidine. Pro-162 provides a ligand contact to S-methyl-5'-thioadenosine.

It belongs to the spermidine/spermine synthase family. Homodimer or homotetramer.

It is found in the cytoplasm. It carries out the reaction S-adenosyl 3-(methylsulfanyl)propylamine + putrescine = S-methyl-5'-thioadenosine + spermidine + H(+). It functions in the pathway amine and polyamine biosynthesis; spermidine biosynthesis; spermidine from putrescine: step 1/1. Catalyzes the irreversible transfer of a propylamine group from the amino donor S-adenosylmethioninamine (decarboxy-AdoMet) to putrescine (1,4-diaminobutane) to yield spermidine. The sequence is that of Polyamine aminopropyltransferase from Lachnoclostridium phytofermentans (strain ATCC 700394 / DSM 18823 / ISDg) (Clostridium phytofermentans).